The chain runs to 912 residues: Collagen alpha-2(I) chain (912 aa).

Positions 1-41 are enriched in low complexity; sequence GPMGIMGPRGPPGASGAPGPQGFQGPAGEPGEPGQTGPAGA. 3 disordered regions span residues 1–206, 222–739, and 763–912; these read GPMG…GITG, IPGP…GIIG, and GPPG…RGSQ. Residues 43 to 57 are compositionally biased toward basic and acidic residues; sequence AGEDGHPGKPGRPGE. Composition is skewed to low complexity over residues 124-153, 178-192, 229-244, 295-327, 360-382, and 406-424; these read VGAP…SAGP, AGPR…ISGP, PGPA…RGIV, PGIR…VRGP, PVGI…RGEP, and AGIA…NGAQ. Positions 431-440 are enriched in gly residues; the sequence is GVQGGKGEQG. Composition is skewed to low complexity over residues 474–501 and 517–532; these read IPGP…SRGP and IGAP…SGIP. Positions 539–548 are enriched in gly residues; the sequence is GIPGGKGEIG. 2 stretches are compositionally biased toward low complexity: residues 549 to 612 and 622 to 637; these read NPGR…QPGA and NGPV…AGPS. The span at 647–656 shows a compositional bias: gly residues; the sequence is GSRGDGGPPG. Low complexity-rich tracts occupy residues 658 to 667, 728 to 739, 763 to 785, 805 to 815, and 830 to 850; these read TGFPGAAGRT, PQGIIGAPGIIG, GPPG…APGE, NAGPVGAVGAP, and PGPV…PSGP.

This sequence belongs to the fibrillar collagen family. As to quaternary structure, trimers of one alpha 2(I) and two alpha 1(I) chains. Interacts (via C-terminus) with TMEM131 (via PapD-L domain); the interaction is direct and is involved in assembly and TRAPPIII ER-to-Golgi transport complex-dependent secretion of collagen. In terms of processing, prolines at the third position of the tripeptide repeating unit (G-X-Y) are hydroxylated in some or all of the chains. In terms of tissue distribution, forms the fibrils of tendon, ligaments and bones. In bones, the fibrils are mineralized with calcium hydroxyapatite.

It is found in the secreted. It localises to the extracellular space. The protein resides in the extracellular matrix. Functionally, type I collagen is a member of group I collagen (fibrillar forming collagen). This Equus sp protein is Collagen alpha-2(I) chain.